We begin with the raw amino-acid sequence, 156 residues long: Phosphoribosyl-AMP cyclohydrolase (156 aa).

Asp106 contacts Mg(2+). A Zn(2+)-binding site is contributed by Cys107. The Mg(2+) site is built by Asp108 and Asp110. Zn(2+) contacts are provided by Cys123 and Cys130.

This sequence belongs to the PRA-CH family. As to quaternary structure, homodimer. Requires Mg(2+) as cofactor. Zn(2+) serves as cofactor.

The protein resides in the cytoplasm. The catalysed reaction is 1-(5-phospho-beta-D-ribosyl)-5'-AMP + H2O = 1-(5-phospho-beta-D-ribosyl)-5-[(5-phospho-beta-D-ribosylamino)methylideneamino]imidazole-4-carboxamide. Its pathway is amino-acid biosynthesis; L-histidine biosynthesis; L-histidine from 5-phospho-alpha-D-ribose 1-diphosphate: step 3/9. Its function is as follows. Catalyzes the hydrolysis of the adenine ring of phosphoribosyl-AMP. In Gluconobacter oxydans (strain 621H) (Gluconobacter suboxydans), this protein is Phosphoribosyl-AMP cyclohydrolase.